A 390-amino-acid chain; its full sequence is Putative F-box protein At3g52320 (390 aa).

One can recognise an F-box domain in the interval 21–71 (VVFLPEIPEEMLIDILIRLPAKSLMRFKCVSKLWLSLITSRYFTNRFFKPS).

The sequence is that of Putative F-box protein At3g52320 from Arabidopsis thaliana (Mouse-ear cress).